We begin with the raw amino-acid sequence, 229 residues long: tRNA (guanine-N(7)-)-methyltransferase (229 aa).

Positions 59, 84, 111, and 134 each coordinate S-adenosyl-L-methionine. Aspartate 134 is an active-site residue. Residues lysine 138, aspartate 170, and 205-208 (TKFE) each bind substrate.

The protein belongs to the class I-like SAM-binding methyltransferase superfamily. TrmB family.

It carries out the reaction guanosine(46) in tRNA + S-adenosyl-L-methionine = N(7)-methylguanosine(46) in tRNA + S-adenosyl-L-homocysteine. The protein operates within tRNA modification; N(7)-methylguanine-tRNA biosynthesis. In terms of biological role, catalyzes the formation of N(7)-methylguanine at position 46 (m7G46) in tRNA. In Nitrosospira multiformis (strain ATCC 25196 / NCIMB 11849 / C 71), this protein is tRNA (guanine-N(7)-)-methyltransferase.